Consider the following 485-residue polypeptide: MNSVSPSAVQYIVGGGAHEDKASASSKRHLGHGAVPDGIREGSGEPDEVDRLKAKFMSAWNNVKYGWTVKSKTSFNKSSPLILLGQSFLFNNEDEVERFRQTFVSCVWLTYRREFPQLDGSSLTTDCGWGCMLRSGQMMLAQGLLLHLMPTDWRWSDCHALTDVDFEVLKPRSPSRPAGMSMPSFSSSWSSSIPQINPSPGITEAHRRAPARCPSASPDPQVDALHRKVVSCFGDHPSAPFGVHQLVELGKESGKRAGDWYGPSVVAHMLRKAVARAAEFEDLAVYVAQDCTVYKEDVMSLCESSGVGWKSVVILVPVRLGGESLNPSYIECVKNILKLKCCIGIIGGKPKHSLFFVGFQDEQLLYLDPHYCQPVVDVTQANFSLESFHCNSPRKMNFSRMDPSCTIGLYARSKTDFESLCTAVSEALSSSKEKYPIFTFVEGRGQIYGMEGPSGGSVDAPAHIFTCSRLSRNNKRGSTDEFVLL.

The disordered stretch occupies residues 22-46 (ASASSKRHLGHGAVPDGIREGSGEP). Catalysis depends on C131, which acts as the Nucleophile. Residues D368 and H370 contribute to the active site.

This sequence belongs to the peptidase C54 family.

The protein localises to the cytoplasm. The catalysed reaction is [protein]-C-terminal L-amino acid-glycyl-phosphatidylethanolamide + H2O = [protein]-C-terminal L-amino acid-glycine + a 1,2-diacyl-sn-glycero-3-phosphoethanolamine. The enzyme catalyses [protein]-C-terminal L-amino acid-glycyl-phosphatidylserine + H2O = [protein]-C-terminal L-amino acid-glycine + a 1,2-diacyl-sn-glycero-3-phospho-L-serine. Cysteine protease that plays a key role in autophagy by mediating both proteolytic activation and delipidation of ATG8 family proteins. The protease activity is required for proteolytic activation of ATG8 family proteins to reveal a C-terminal glycine. Exposure of the glycine at the C-terminus is essential for ATG8 proteins conjugation to phosphatidylethanolamine (PE) and insertion to membranes, which is necessary for autophagy. In addition to the protease activity, also mediates delipidation of ATG8 family proteins. Catalyzes delipidation of PE-conjugated forms of ATG8 proteins during macroautophagy. Also involved in non-canonical autophagy, a parallel pathway involving conjugation of ATG8 proteins to single membranes at endolysosomal compartments, by catalyzing delipidation of ATG8 proteins conjugated to phosphatidylserine (PS). ATG4D plays a role in the autophagy-mediated neuronal homeostasis in the central nervous system. The polypeptide is Cysteine protease atg4da (Danio rerio (Zebrafish)).